A 149-amino-acid chain; its full sequence is Low molecular weight protein-tyrosine-phosphatase Wzb (149 aa).

Catalysis depends on cysteine 9, which acts as the Nucleophile. Arginine 15 is a catalytic residue. Aspartate 115 acts as the Proton donor in catalysis.

The protein belongs to the low molecular weight phosphotyrosine protein phosphatase family.

The enzyme catalyses O-phospho-L-tyrosyl-[protein] + H2O = L-tyrosyl-[protein] + phosphate. It functions in the pathway glycan metabolism; exopolysaccharide biosynthesis. Functionally, dephosphorylates Wzc. Required for the extracellular polysaccharide colanic acid synthesis. Probably involved in the export of colanic acid from the cell to medium. Involved in protection of cells against contact-dependent growth inhibition (CDI). This is Low molecular weight protein-tyrosine-phosphatase Wzb (wzb) from Salmonella typhi.